We begin with the raw amino-acid sequence, 404 residues long: MSILKKYKDMYPDENGKFGIYGGKFVPETLMPAIAELEEAFKRFWINNEGNFREEFYALLRDYVGRPTPLYYAERLSEELGCKVYLKREDLAHLGAHKINNALGQALLAKKMGKKRVIAETGAGQHGVATAAACAKLGLECIIYMGAKDVERQKLNVFRMELMGAKVIPVFGGSQTLKDAVNEALRDWTTNVRTTYYLLGSALGPHPYPMMVREFQRVIGKELKEQILEKEGRLPDVIVACVGGGSNAIGAFYEFLDDDVELYAVEAGGKGIETGMHGASLCAGEVGVLHGAKIYVKEDEFGQIEESYSISAGLDYPGVGPELSFLKDEGRIKAVCVTDDEALEAFQLLCRLEGILPALESSHALAYAVKLADKLDKDDIMVINLSGRGDKDVQTVAKALGREI.

Residue Lys98 is modified to N6-(pyridoxal phosphate)lysine.

It belongs to the TrpB family. Tetramer of two alpha and two beta chains. Pyridoxal 5'-phosphate is required as a cofactor.

It carries out the reaction (1S,2R)-1-C-(indol-3-yl)glycerol 3-phosphate + L-serine = D-glyceraldehyde 3-phosphate + L-tryptophan + H2O. It participates in amino-acid biosynthesis; L-tryptophan biosynthesis; L-tryptophan from chorismate: step 5/5. In terms of biological role, the beta subunit is responsible for the synthesis of L-tryptophan from indole and L-serine. The polypeptide is Tryptophan synthase beta chain (trpB) (Methanocaldococcus jannaschii (strain ATCC 43067 / DSM 2661 / JAL-1 / JCM 10045 / NBRC 100440) (Methanococcus jannaschii)).